The sequence spans 258 residues: tRNA (guanine-N(7)-)-methyltransferase (258 aa).

The disordered stretch occupies residues 1–42 (MPETPLMRDNGPVNHADQDAPAVPEEGQTKDSKGSRLHPRVT). S-adenosyl-L-methionine contacts are provided by Glu-90, Glu-115, Asp-142, and Asp-165. Asp-165 is a catalytic residue. Residues Lys-169, Asp-201, and 235–238 (TKFE) each bind substrate.

The protein belongs to the class I-like SAM-binding methyltransferase superfamily. TrmB family.

The catalysed reaction is guanosine(46) in tRNA + S-adenosyl-L-methionine = N(7)-methylguanosine(46) in tRNA + S-adenosyl-L-homocysteine. The protein operates within tRNA modification; N(7)-methylguanine-tRNA biosynthesis. In terms of biological role, catalyzes the formation of N(7)-methylguanine at position 46 (m7G46) in tRNA. This Rhodococcus jostii (strain RHA1) protein is tRNA (guanine-N(7)-)-methyltransferase.